The primary structure comprises 226 residues: uncharacterized protein (226 aa).

The helical transmembrane segment at 5-25 threads the bilayer; the sequence is IKTVSFAAAAILVVIICTFLI.

The protein resides in the cell membrane. This is an uncharacterized protein from Bacillus subtilis (strain 168).